We begin with the raw amino-acid sequence, 242 residues long: MTKLFIPYIMGNKDLIENATLLSENGADIIEIGVPFSDPVADGPVIMEAGQQAIKQGITIDYIFEQLEKHGNQIKCQYVLMTYYNIICHYGEQAFFEKCRDTGVYGLIIPDLPFELSQRLKQQFSHYGVKIISLVAMTTDDKRIKDIVSYAEGFIYTVTMNATTGQNGAFHPELKRKIESIKAIANVPVVAGFGIRSPQHVADIKEVADGIVIGSEIVKRFKSNTREEIIKYLQSIQQTLNN.

Catalysis depends on proton acceptor residues Glu31 and Asp42.

The protein belongs to the TrpA family. As to quaternary structure, tetramer of two alpha and two beta chains.

The catalysed reaction is (1S,2R)-1-C-(indol-3-yl)glycerol 3-phosphate + L-serine = D-glyceraldehyde 3-phosphate + L-tryptophan + H2O. It functions in the pathway amino-acid biosynthesis; L-tryptophan biosynthesis; L-tryptophan from chorismate: step 5/5. Functionally, the alpha subunit is responsible for the aldol cleavage of indoleglycerol phosphate to indole and glyceraldehyde 3-phosphate. The polypeptide is Tryptophan synthase alpha chain (Staphylococcus aureus (strain MRSA252)).